The sequence spans 68 residues: UPF0253 protein AHA_2115 (68 aa).

It belongs to the UPF0253 family.

This chain is UPF0253 protein AHA_2115, found in Aeromonas hydrophila subsp. hydrophila (strain ATCC 7966 / DSM 30187 / BCRC 13018 / CCUG 14551 / JCM 1027 / KCTC 2358 / NCIMB 9240 / NCTC 8049).